A 223-amino-acid polypeptide reads, in one-letter code: 23 kDa piroplasm membrane protein (223 aa).

The signal sequence occupies residues 1-19 (MHKFTKVFFVAILVHTLKS). At 20–197 (GLVFTPVSGT…EEEKSDKKKY (178 aa)) the chain is on the extracellular side. An N-linked (GlcNAc...) asparagine glycan is attached at Asn-69. A helical transmembrane segment spans residues 198–218 (VLMVVVVVVFVVVASLVVFLV). Topologically, residues 219–223 (KFCLK) are cytoplasmic.

It localises to the membrane. This chain is 23 kDa piroplasm membrane protein, found in Theileria buffeli.